Consider the following 639-residue polypeptide: Mediator of RNA polymerase II transcription subunit 17 (639 aa).

A coiled-coil region spans residues 160–187 (RLQNFNAAADKLLKSASRLENEVASETR).

This sequence belongs to the Mediator complex subunit 17 family. In terms of assembly, component of the Mediator complex.

It is found in the nucleus. Functionally, component of the Mediator complex, a coactivator involved in the regulated transcription of nearly all RNA polymerase II-dependent genes. Mediator functions as a bridge to convey information from gene-specific regulatory proteins to the basal RNA polymerase II transcription machinery. Mediator is recruited to promoters by direct interactions with regulatory proteins and serves as a scaffold for the assembly of a functional preinitiation complex with RNA polymerase II and the general transcription factors. This chain is Mediator of RNA polymerase II transcription subunit 17 (srb4), found in Neosartorya fischeri (strain ATCC 1020 / DSM 3700 / CBS 544.65 / FGSC A1164 / JCM 1740 / NRRL 181 / WB 181) (Aspergillus fischerianus).